A 35-amino-acid chain; its full sequence is Photosystem II reaction center protein T (35 aa).

Residues S3–F23 form a helical membrane-spanning segment.

This sequence belongs to the PsbT family. As to quaternary structure, PSII is composed of 1 copy each of membrane proteins PsbA, PsbB, PsbC, PsbD, PsbE, PsbF, PsbH, PsbI, PsbJ, PsbK, PsbL, PsbM, PsbT, PsbX, PsbY, PsbZ, Psb30/Ycf12, peripheral proteins PsbO, CyanoQ (PsbQ), PsbU, PsbV and a large number of cofactors. It forms dimeric complexes.

The protein resides in the cellular thylakoid membrane. Its function is as follows. Found at the monomer-monomer interface of the photosystem II (PS II) dimer, plays a role in assembly and dimerization of PSII. PSII is a light-driven water plastoquinone oxidoreductase, using light energy to abstract electrons from H(2)O, generating a proton gradient subsequently used for ATP formation. The chain is Photosystem II reaction center protein T from Nostoc sp. (strain PCC 7120 / SAG 25.82 / UTEX 2576).